The chain runs to 256 residues: uncharacterized protein (256 aa).

The next 3 membrane-spanning stretches (helical) occupy residues 42 to 62 (LIAL…IWFF), 73 to 93 (FFTL…LIFL), and 108 to 128 (WLFL…WLIV).

Its subcellular location is the cell membrane. This is an uncharacterized protein from Mycoplasma genitalium (strain ATCC 33530 / DSM 19775 / NCTC 10195 / G37) (Mycoplasmoides genitalium).